The following is a 457-amino-acid chain: 4-hydroxybenzoate transporter PcaK (457 aa).

At 1–34 (MPKEANMASQDYATQRSSLDAQALINDAPLSRYQ) the chain is on the cytoplasmic side. Residues 35–55 (WLIAIVCFLIVFVDGIDTAAM) traverse the membrane as a helical segment. At 56 to 72 (GFIAPALAQDWGVDRSQ) the chain is on the periplasmic side. The chain crosses the membrane as a helical span at residues 73-93 (LGPVMSAALGGMIIGALVSGP). Residues 94 to 101 (TADRFGRK) are Cytoplasmic-facing. The chain crosses the membrane as a helical span at residues 102 to 122 (IVLSMSMLVFGGFTLACAYST). Residues 123-128 (NLDSLV) are Periplasmic-facing. A helical transmembrane segment spans residues 129–149 (IFRFLTGIGLGAAMPNATTLF). The Cytoplasmic segment spans residues 150–168 (SEYCPARIRSLLVTCMFCG). A helical membrane pass occupies residues 169–189 (YNLGMAIGGFISSWLIPAFGW). Over 190–191 (HS) the chain is Periplasmic. Residues 192–212 (LFLLGGWAPLILMLLVIFFLP) traverse the membrane as a helical segment. The Cytoplasmic segment spans residues 213-274 (ESYRFLIVKG…LFSAKYVKGT (62 aa)). A helical transmembrane segment spans residues 275-295 (VLLWVTYFMGLVMIYLLTSWL). At 296-310 (PTLMRETGASLERAA) the chain is on the periplasmic side. A helical membrane pass occupies residues 311–331 (FLGGLFQFGGVLSALFIGWAM). Over 332–338 (DRFNPNR) the chain is Cytoplasmic. A helical membrane pass occupies residues 339-359 (IIAGFYLAAGIFAVIVGQSLS). At 360–363 (NPTL) the chain is on the periplasmic side. The chain crosses the membrane as a helical span at residues 364–384 (LALFILCAGIAVNGAQSSMPV). The Cytoplasmic portion of the chain corresponds to 385–400 (LSARFYPTQCRATGVA). A helical transmembrane segment spans residues 401–421 (WMSGIGRFGAVFGAWIGAVLL). Residues 422 to 426 (GNNWS) are Periplasmic-facing. The chain crosses the membrane as a helical span at residues 427 to 447 (FTMILSMLIIPAAAAAIAIFV). The Cytoplasmic portion of the chain corresponds to 448 to 457 (KSLVAHTDAT).

Belongs to the major facilitator superfamily. Aromatic acid:H(+) symporter (AAHS) (TC 2.A.1.15) family. In terms of assembly, homotrimer.

The protein resides in the cell inner membrane. Functionally, uptake of 4-hydroxybenzoate (4-HB). Can also transport a variety of aromatic acids with hydroxyl substitutions at the 2-, 3- and 4-positions, such as salicylate, 2,4-dihydroxybenzoate, protocatechuate, 3-hydroxybenzoate, vanillate and gentisate. In Acinetobacter baylyi (strain ATCC 33305 / BD413 / ADP1), this protein is 4-hydroxybenzoate transporter PcaK.